The sequence spans 88 residues: Apolipoprotein C-I (88 aa).

A signal peptide spans 1 to 26 (MRLILSLPVLAVVLAMVLEGPAPAQA).

This sequence belongs to the apolipoprotein C1 family.

The protein localises to the secreted. In terms of biological role, inhibitor of lipoprotein binding to the low density lipoprotein (LDL) receptor, LDL receptor-related protein, and very low density lipoprotein (VLDL) receptor. Associates with high density lipoproteins (HDL) and the triacylglycerol-rich lipoproteins in the plasma and makes up about 10% of the protein of the VLDL and 2% of that of HDL. Appears to interfere directly with fatty acid uptake and is also the major plasma inhibitor of cholesteryl ester transfer protein (CETP). Binds free fatty acids and reduces their intracellular esterification. Modulates the interaction of APOE with beta-migrating VLDL and inhibits binding of beta-VLDL to the LDL receptor-related protein. This chain is Apolipoprotein C-I (APOC1), found in Eidolon helvum (Straw-colored fruit bat).